The sequence spans 45 residues: Photosystem II reaction center protein K (45 aa).

Residues 1–8 (MEAALLLA) constitute a propeptide that is removed on maturation. A helical membrane pass occupies residues 24–44 (LPIIPLFFLALAFVWQAAVGF).

Belongs to the PsbK family. PSII is composed of 1 copy each of membrane proteins PsbA, PsbB, PsbC, PsbD, PsbE, PsbF, PsbH, PsbI, PsbJ, PsbK, PsbL, PsbM, PsbT, PsbX, PsbY, PsbZ, Psb30/Ycf12, peripheral proteins PsbO, CyanoQ (PsbQ), PsbU, PsbV and a large number of cofactors. It forms dimeric complexes.

The protein localises to the cellular thylakoid membrane. Its function is as follows. One of the components of the core complex of photosystem II (PSII). PSII is a light-driven water:plastoquinone oxidoreductase that uses light energy to abstract electrons from H(2)O, generating O(2) and a proton gradient subsequently used for ATP formation. It consists of a core antenna complex that captures photons, and an electron transfer chain that converts photonic excitation into a charge separation. The chain is Photosystem II reaction center protein K from Rippkaea orientalis (strain PCC 8801 / RF-1) (Cyanothece sp. (strain PCC 8801)).